The primary structure comprises 409 residues: Peptidase T (409 aa).

His-78 contacts Zn(2+). Asp-80 is a catalytic residue. Asp-140 is a Zn(2+) binding site. Catalysis depends on Glu-174, which acts as the Proton acceptor. 3 residues coordinate Zn(2+): Glu-175, Asp-197, and His-379.

The protein belongs to the peptidase M20B family. The cofactor is Zn(2+).

The protein localises to the cytoplasm. The catalysed reaction is Release of the N-terminal residue from a tripeptide.. Its function is as follows. Cleaves the N-terminal amino acid of tripeptides. This chain is Peptidase T, found in Vibrio parahaemolyticus serotype O3:K6 (strain RIMD 2210633).